We begin with the raw amino-acid sequence, 914 residues long: Zinc finger protein 717 (914 aa).

The region spanning 22-93 is the KRAB domain; the sequence is VSFEEVAVHF…EETPNLRLSA (72 aa). Residues 209-231 form a C2H2-type 1; degenerate zinc finger; the sequence is FQCNEQGKTFNTEAMFFIHKRVH. The C2H2-type 2; degenerate zinc finger occupies 266-277; it reads RKSDFTKHQQTH. The C2H2-type 3; degenerate zinc finger occupies 283-305; the sequence is YECVECEKPSISKSDLMLQCKMP. 12 consecutive C2H2-type zinc fingers follow at residues 311–333, 339–361, 367–389, 395–417, 423–445, 451–473, 479–501, 507–529, 535–557, 563–585, 591–613, and 619–641; these read YACN…QRIH, YGCN…ERTH, YKCI…HRTH, YQCS…HRTH, YACD…QRTH, YECN…QRTH, YECN…QWTH, YACN…HRTH, YECN…KRTH, and YECN…QGTH. A C2H2-type 16; degenerate zinc finger spans residues 649–669; the sequence is CNECGKTFHRKSFLTIHQRTH. The segment at 741 to 752 adopts a C2H2-type 17; degenerate zinc-finger fold; the sequence is QKSVLTVHHRTH. 5 consecutive C2H2-type zinc fingers follow at residues 758–780, 786–808, 814–836, 842–864, and 870–892; these read YECN…QGTH, YECD…QRTH, FECK…HRTH, FRCN…QRTH, and YECK…QQTH.

Belongs to the krueppel C2H2-type zinc-finger protein family.

The protein localises to the nucleus. Its function is as follows. May be involved in transcriptional regulation. The sequence is that of Zinc finger protein 717 from Homo sapiens (Human).